Consider the following 420-residue polypeptide: 2,3-dimethylmalate dehydratase large subunit (420 aa).

[4Fe-4S] cluster is bound by residues cysteine 301, cysteine 361, and cysteine 364.

This sequence belongs to the aconitase/IPM isomerase family. LeuC type 2 subfamily. As to quaternary structure, heterodimer of a large and a small subunit. The cofactor is [4Fe-4S] cluster.

It catalyses the reaction (2R,3S)-2,3-dimethylmalate = dimethylmaleate + H2O. It functions in the pathway cofactor degradation; nicotinate degradation; propanoate and pyruvate from 6-hydroxynicotinate: step 7/8. This Eubacterium barkeri (Clostridium barkeri) protein is 2,3-dimethylmalate dehydratase large subunit (dmdA).